The sequence spans 445 residues: Tubulin beta-3 chain (445 aa).

Gln11, Glu69, Ser138, Gly142, Thr143, Gly144, Asn204, and Asn226 together coordinate GTP. Position 69 (Glu69) interacts with Mg(2+). Residues 421–445 (EYQQYQDATADEEEEYDEEEEEEAA) are disordered. Positions 429–445 (TADEEEEYDEEEEEEAA) are enriched in acidic residues.

The protein belongs to the tubulin family. Dimer of alpha and beta chains. A typical microtubule is a hollow water-filled tube with an outer diameter of 25 nm and an inner diameter of 15 nM. Alpha-beta heterodimers associate head-to-tail to form protofilaments running lengthwise along the microtubule wall with the beta-tubulin subunit facing the microtubule plus end conferring a structural polarity. Microtubules usually have 13 protofilaments but different protofilament numbers can be found in some organisms and specialized cells. Mg(2+) is required as a cofactor.

It localises to the cytoplasm. Its subcellular location is the cytoskeleton. Tubulin is the major constituent of microtubules, a cylinder consisting of laterally associated linear protofilaments composed of alpha- and beta-tubulin heterodimers. Microtubules grow by the addition of GTP-tubulin dimers to the microtubule end, where a stabilizing cap forms. Below the cap, tubulin dimers are in GDP-bound state, owing to GTPase activity of alpha-tubulin. The protein is Tubulin beta-3 chain (TUBB3) of Triticum aestivum (Wheat).